The primary structure comprises 125 residues: Large ribosomal subunit protein uL22 (125 aa).

Belongs to the universal ribosomal protein uL22 family. In terms of assembly, part of the 50S ribosomal subunit.

Its function is as follows. This protein binds specifically to 23S rRNA; its binding is stimulated by other ribosomal proteins, e.g. L4, L17, and L20. It is important during the early stages of 50S assembly. It makes multiple contacts with different domains of the 23S rRNA in the assembled 50S subunit and ribosome. In terms of biological role, the globular domain of the protein is located near the polypeptide exit tunnel on the outside of the subunit, while an extended beta-hairpin is found that lines the wall of the exit tunnel in the center of the 70S ribosome. The protein is Large ribosomal subunit protein uL22 of Acetivibrio thermocellus (strain ATCC 27405 / DSM 1237 / JCM 9322 / NBRC 103400 / NCIMB 10682 / NRRL B-4536 / VPI 7372) (Clostridium thermocellum).